The sequence spans 478 residues: Zinc metalloproteinase/disintegrin (478 aa).

The signal sequence occupies residues 1 to 20 (MIEVLLVTICLAVFPYPGSS). Residues 21–190 (IILESGNVDD…KASQLYLTPE (170 aa)) constitute a propeptide that is removed on maturation. Pyrrolidone carboxylic acid is present on glutamine 191. The Peptidase M12B domain maps to 197–392 (RYIELAIVVD…SKPQCIINAP (196 aa)). 2 residues coordinate Ca(2+): glutamate 200 and aspartate 284. Intrachain disulfides connect cysteine 308–cysteine 387, cysteine 349–cysteine 371, and cysteine 351–cysteine 354. Position 333 (histidine 333) interacts with Zn(2+). Glutamate 334 is a catalytic residue. The Zn(2+) site is built by histidine 337 and histidine 343. Ca(2+)-binding residues include cysteine 387 and asparagine 390. Positions 393–410 (LRTDTVSTPVSGNEFLEA) are excised as a propeptide. Positions 400–478 (TPVSGNEFLE…GQSADCPRNS (79 aa)) constitute a Disintegrin domain. 6 disulfide bridges follow: cysteine 414-cysteine 429, cysteine 416-cysteine 424, cysteine 423-cysteine 446, cysteine 437-cysteine 443, cysteine 442-cysteine 467, and cysteine 455-cysteine 474. Residues 459-461 (RGD) carry the Cell attachment site motif. Positions 459 to 478 (RGDNPDDRCTGQSADCPRNS) are disordered. Polar residues predominate over residues 468–478 (TGQSADCPRNS).

Belongs to the venom metalloproteinase (M12B) family. P-II subfamily. P-IIa sub-subfamily. As to quaternary structure, monomer. It depends on Zn(2+) as a cofactor. In terms of processing, not N-glycosylated. Expressed by the venom gland.

It is found in the secreted. It catalyses the reaction Cleavage of 3-Asn-|-Gln-4, 10-His-|-Leu-11 and 14-Ala-|-Leu-15 in the insulin B chain, and the bond Z-Gly-Pro-|-Leu-Gly-Pro in a small molecule substrate of microbial collagenase.. In terms of biological role, zinc protease that induces hemorrhage. Inhibits platelet aggregation induced by ADP, thrombin, and collagen. Acts by inhibiting fibrinogen interaction with platelet receptors GPIIb/GPIIIa (ITGA2B/ITGB3). This chain is Zinc metalloproteinase/disintegrin, found in Protobothrops flavoviridis (Habu).